The primary structure comprises 264 residues: Indolethylamine N-methyltransferase (264 aa).

N6-succinyllysine is present on K14. Residues Y21, Y26, 64–65 (GS), Y70, D86, and N91 contribute to the S-adenosyl-L-methionine site. Position 97 is an N6-succinyllysine (K97). S-adenosyl-L-methionine-binding positions include 143–144 (DV) and F164.

Belongs to the class I-like SAM-binding methyltransferase superfamily. NNMT/PNMT/TEMT family. In terms of assembly, monomer. In terms of tissue distribution, detected in lung and liver (at protein level).

The protein localises to the cytoplasm. The catalysed reaction is a tertiary amine + S-adenosyl-L-methionine = a methylated tertiary amine + S-adenosyl-L-homocysteine + H(+). It catalyses the reaction a secondary amine + S-adenosyl-L-methionine = a methylated secondary amine + S-adenosyl-L-homocysteine + H(+). It carries out the reaction a primary amine + S-adenosyl-L-methionine = a methylated primary amine + S-adenosyl-L-homocysteine + H(+). The enzyme catalyses dimethyl sulfide + S-adenosyl-L-methionine = trimethylsulfonium + S-adenosyl-L-homocysteine. With respect to regulation, inhibited by the S-adenosyl-L-methionine analog sinefungin and by the product S-adenosyl-L-homocysteine. Its function is as follows. Catalyzes the N-methylation of tryptamine and structurally related compounds. Functions as a thioether S-methyltransferase and is active with a variety of thioethers and the corresponding selenium and tellurium compounds, including 3-methylthiopropionaldehyde, dimethyl selenide, dimethyl telluride, 2-methylthioethylamine, 2-methylthioethanol, methyl-n-propyl sulfide and diethyl sulfide. Plays an important role in the detoxification of selenium compounds. This chain is Indolethylamine N-methyltransferase (Inmt), found in Mus musculus (Mouse).